Reading from the N-terminus, the 131-residue chain is Holo-[acyl-carrier-protein] synthase (131 aa).

Mg(2+) contacts are provided by Asp-8 and Glu-59.

Belongs to the P-Pant transferase superfamily. AcpS family. Mg(2+) serves as cofactor.

The protein localises to the cytoplasm. The enzyme catalyses apo-[ACP] + CoA = holo-[ACP] + adenosine 3',5'-bisphosphate + H(+). Functionally, transfers the 4'-phosphopantetheine moiety from coenzyme A to a Ser of acyl-carrier-protein. The sequence is that of Holo-[acyl-carrier-protein] synthase from Paramagnetospirillum magneticum (strain ATCC 700264 / AMB-1) (Magnetospirillum magneticum).